The chain runs to 441 residues: Ribosomal protein uS12 methylthiotransferase RimO (441 aa).

An MTTase N-terminal domain is found at 8–118 (PKIGFVSLGC…VLQHVHHYVP (111 aa)). Residues cysteine 17, cysteine 53, cysteine 82, cysteine 150, cysteine 154, and cysteine 157 each coordinate [4Fe-4S] cluster. Residues 136–373 (LTPRHYAYLK…MQLQQQISAE (238 aa)) enclose the Radical SAM core domain. Positions 376–441 (QEKVGREILV…DEYDLWGSRV (66 aa)) constitute a TRAM domain.

Belongs to the methylthiotransferase family. RimO subfamily. The cofactor is [4Fe-4S] cluster.

It is found in the cytoplasm. The catalysed reaction is L-aspartate(89)-[ribosomal protein uS12]-hydrogen + (sulfur carrier)-SH + AH2 + 2 S-adenosyl-L-methionine = 3-methylsulfanyl-L-aspartate(89)-[ribosomal protein uS12]-hydrogen + (sulfur carrier)-H + 5'-deoxyadenosine + L-methionine + A + S-adenosyl-L-homocysteine + 2 H(+). Functionally, catalyzes the methylthiolation of an aspartic acid residue of ribosomal protein uS12. In Salmonella paratyphi B (strain ATCC BAA-1250 / SPB7), this protein is Ribosomal protein uS12 methylthiotransferase RimO.